The chain runs to 484 residues: tRNA sulfurtransferase (484 aa).

One can recognise a THUMP domain in the interval 63–167 (ANLILLLSST…NEKLFFIDKK (105 aa)). ATP is bound by residues 185-186 (LI), lysine 267, glycine 289, and glutamine 298. Cysteine 346 and cysteine 458 are joined by a disulfide. The Rhodanese domain occupies 406–484 (FAENEIVLDI…GFDNVKVYRP (79 aa)). Cysteine 458 serves as the catalytic Cysteine persulfide intermediate.

It belongs to the ThiI family.

The protein localises to the cytoplasm. The enzyme catalyses [ThiI sulfur-carrier protein]-S-sulfanyl-L-cysteine + a uridine in tRNA + 2 reduced [2Fe-2S]-[ferredoxin] + ATP + H(+) = [ThiI sulfur-carrier protein]-L-cysteine + a 4-thiouridine in tRNA + 2 oxidized [2Fe-2S]-[ferredoxin] + AMP + diphosphate. It carries out the reaction [ThiS sulfur-carrier protein]-C-terminal Gly-Gly-AMP + S-sulfanyl-L-cysteinyl-[cysteine desulfurase] + AH2 = [ThiS sulfur-carrier protein]-C-terminal-Gly-aminoethanethioate + L-cysteinyl-[cysteine desulfurase] + A + AMP + 2 H(+). Its pathway is cofactor biosynthesis; thiamine diphosphate biosynthesis. In terms of biological role, catalyzes the ATP-dependent transfer of a sulfur to tRNA to produce 4-thiouridine in position 8 of tRNAs, which functions as a near-UV photosensor. Also catalyzes the transfer of sulfur to the sulfur carrier protein ThiS, forming ThiS-thiocarboxylate. This is a step in the synthesis of thiazole, in the thiamine biosynthesis pathway. The sulfur is donated as persulfide by IscS. In Psychromonas ingrahamii (strain DSM 17664 / CCUG 51855 / 37), this protein is tRNA sulfurtransferase.